The sequence spans 74 residues: Conotoxin Im6.10 (74 aa).

Positions Met-1–Gly-19 are cleaved as a signal peptide. Residues Ser-20 to Arg-47 constitute a propeptide that is removed on maturation. Intrachain disulfides connect Cys-49/Cys-58, Cys-52/Cys-63, and Cys-57/Cys-73.

Expressed by the venom duct.

It is found in the secreted. Probable neurotoxin. This is Conotoxin Im6.10 from Conus imperialis (Imperial cone).